Here is a 750-residue protein sequence, read N- to C-terminus: Photosystem I P700 chlorophyll a apoprotein A1 (750 aa).

Helical transmembrane passes span 70-93 (VFSA…FHGA), 156-179 (LYCT…FHYH), 195-219 (LNHH…HVSL), 291-309 (IAHH…GHMY), 346-369 (WHAQ…HHMY), 385-411 (LSLF…IFMV), 433-455 (AIIS…LYIH), and 531-549 (FLVH…LILL). Residues cysteine 573 and cysteine 582 each coordinate [4Fe-4S] cluster. The next 2 helical transmembrane spans lie at 589-610 (HVFL…HFSW) and 664-686 (LSAY…MFLF). Histidine 675 provides a ligand contact to chlorophyll a'. Methionine 683 and tyrosine 691 together coordinate chlorophyll a. Tryptophan 692 contacts phylloquinone. The chain crosses the membrane as a helical span at residues 724–744 (AVGVTHYLLGGIATTWAFFLA).

Belongs to the PsaA/PsaB family. The PsaA/B heterodimer binds the P700 chlorophyll special pair and subsequent electron acceptors. PSI consists of a core antenna complex that captures photons, and an electron transfer chain that converts photonic excitation into a charge separation. The eukaryotic PSI reaction center is composed of at least 11 subunits. The cofactor is P700 is a chlorophyll a/chlorophyll a' dimer, A0 is one or more chlorophyll a, A1 is one or both phylloquinones and FX is a shared 4Fe-4S iron-sulfur center..

The protein resides in the plastid. Its subcellular location is the chloroplast thylakoid membrane. The catalysed reaction is reduced [plastocyanin] + hnu + oxidized [2Fe-2S]-[ferredoxin] = oxidized [plastocyanin] + reduced [2Fe-2S]-[ferredoxin]. In terms of biological role, psaA and PsaB bind P700, the primary electron donor of photosystem I (PSI), as well as the electron acceptors A0, A1 and FX. PSI is a plastocyanin-ferredoxin oxidoreductase, converting photonic excitation into a charge separation, which transfers an electron from the donor P700 chlorophyll pair to the spectroscopically characterized acceptors A0, A1, FX, FA and FB in turn. Oxidized P700 is reduced on the lumenal side of the thylakoid membrane by plastocyanin. The polypeptide is Photosystem I P700 chlorophyll a apoprotein A1 (Nymphaea alba (White water-lily)).